The chain runs to 150 residues: Urease accessory protein UreE (150 aa).

Belongs to the UreE family.

The protein localises to the cytoplasm. In terms of biological role, involved in urease metallocenter assembly. Binds nickel. Probably functions as a nickel donor during metallocenter assembly. This is Urease accessory protein UreE from Staphylococcus aureus (strain MRSA252).